The chain runs to 327 residues: Methionine import ATP-binding protein MetN (327 aa).

An ABC transporter domain is found at 3–239 (VELKNIEKIY…PKHAVTKELL (237 aa)). Position 36–43 (36–43 (GYSGAGKS)) interacts with ATP.

It belongs to the ABC transporter superfamily. Methionine importer (TC 3.A.1.24) family. As to quaternary structure, the complex is composed of two ATP-binding proteins (MetN), two transmembrane proteins (MetI) and a solute-binding protein (MetQ).

Its subcellular location is the cell inner membrane. It catalyses the reaction L-methionine(out) + ATP + H2O = L-methionine(in) + ADP + phosphate + H(+). The enzyme catalyses D-methionine(out) + ATP + H2O = D-methionine(in) + ADP + phosphate + H(+). Its function is as follows. Part of the ABC transporter complex MetNIQ involved in methionine import. Responsible for energy coupling to the transport system. This is Methionine import ATP-binding protein MetN from Helicobacter pylori (strain J99 / ATCC 700824) (Campylobacter pylori J99).